We begin with the raw amino-acid sequence, 251 residues long: Cyclohexanol dehydrogenase (251 aa).

Positions 42, 95, 161, 165, 194, and 196 each coordinate NAD(+). The Proton acceptor role is filled by tyrosine 161.

The protein belongs to the short-chain dehydrogenases/reductases (SDR) family.

It catalyses the reaction cyclohexanol + NAD(+) = cyclohexanone + NADH + H(+). Its function is as follows. Catalyzes the oxidation of cyclohexanol to cyclohexanone. Required for the conversion of cyclohexanol to adipic acid. The polypeptide is Cyclohexanol dehydrogenase (Acinetobacter sp. (strain SE19)).